We begin with the raw amino-acid sequence, 261 residues long: Putative [LysW]-aminoadipate/[LysW]-glutamate kinase (261 aa).

Residues 35–36 (GG), Arg62, and Asn162 each bind substrate.

It belongs to the acetylglutamate kinase family. LysZ subfamily.

It is found in the cytoplasm. It catalyses the reaction [amino-group carrier protein]-C-terminal-N-(1,4-dicarboxybutan-1-yl)-L-glutamine + ATP = [amino-group carrier protein]-C-terminal-N-(1-carboxy-5-phosphooxy-5-oxopentan-1-yl)-L-glutamine + ADP. The catalysed reaction is [amino-group carrier protein]-C-terminal-gamma-(L-glutamyl)-L-glutamate + ATP = [amino-group carrier protein]-C-terminal-gamma-(5-phospho-L-glutamyl)-L-glutamate + ADP. The protein operates within amino-acid biosynthesis; L-lysine biosynthesis via AAA pathway; L-lysine from L-alpha-aminoadipate (Thermus route): step 2/5. Its pathway is amino-acid biosynthesis; L-arginine biosynthesis. Functionally, involved in both the arginine and lysine biosynthetic pathways. Phosphorylates the LysW-bound precursors glutamate (for arginine biosynthesis), respectively alpha-aminoadipate (for lysine biosynthesis). In Pyrobaculum islandicum (strain DSM 4184 / JCM 9189 / GEO3), this protein is Putative [LysW]-aminoadipate/[LysW]-glutamate kinase.